Here is a 179-residue protein sequence, read N- to C-terminus: Transcription factor BOA15 (179 aa).

It localises to the nucleus. Functionally, transcription factor that probably coregulates the gene clusters that mediates the biosynthesis of botcinin acid and its botcinin derivatives, acetate-derived polyketides that contribute to virulence when combined with the sesquiterpene botrydial. Botcinin acid and its derivatives have been shown to induce chlorosis and necrosis during host plant infection, but also have antifungal activities. This Botryotinia fuckeliana (strain B05.10) (Noble rot fungus) protein is Transcription factor BOA15.